Consider the following 2343-residue polypeptide: Pecanex-like protein 1 (2343 aa).

Helical transmembrane passes span 33–53 and 57–77; these read ALHLYLWLFLLGLPFTLYMAL and MIIVAVYCPVVAAVFIVLKMV. 4 disordered regions span residues 98 to 163, 271 to 290, 306 to 691, and 749 to 826; these read FTDQ…GSSR, SHSYRKEHRPRGVPRTSSSA, QQQR…TRAR, and TRSR…QGQQ. Residues 143–163 show a composition bias toward polar residues; the sequence is SSRNSYAGLDPSNQIGSGSSR. The span at 272-282 shows a compositional bias: basic residues; it reads HSYRKEHRPRG. Low complexity predominate over residues 372 to 390; it reads SLRSLSTRSSGSTESYCSG. The segment covering 396 to 412 has biased composition (polar residues); that stretch reads NSTLSSYKSEQTSSTHI. Basic and acidic residues-rich tracts occupy residues 416–457, 507–521, and 530–546; these read LSEH…DKTA, RPPEQSAESKEEQGE, and KVCKDDGGKQKEGDVRP. Residues 556–571 show a composition bias toward basic residues; the sequence is TSAHKPGRRRTGKKRA. 3 stretches are compositionally biased toward low complexity: residues 624–637, 769–780, and 809–826; these read SDSSSSATSHSCQS, AATGAAQASEEA, and TLLIGPPLSLQDGQQGQQ. The next 13 helical transmembrane spans lie at 978–998, 1009–1029, 1034–1054, 1068–1088, 1118–1138, 1162–1182, 1195–1215, 1268–1288, 1296–1316, 1406–1426, 1434–1454, 1458–1478, and 1493–1513; these read FWILPQLWIGINFDRLTLLAL, ILAVVLAILVAFLGSILLIQG, IWVFQFCLVIASCQYSLLKSV, IIAYSRPVYFCLCCGLIWLLD, LVIVFTLCFPIVFFIGLLPQV, LLAALYSFLCSVVAVALLYGL, HIPVLFSVFCGLLVAVSYHLS, LVVCVVIGVLYFAIHVSTVFT, YVLYALVGFVGLVTHYVLPQV, SFSSPTYQYITVIFTVLFFKF, TMLLDLFFMSILFSKLWELLY, FVYTYVAPWQITWGSAFHAFA, and AVVSALFSTPLNPFLGSAIFI. The tract at residues 2050 to 2120 is disordered; it reads EDSDTGGGTS…VQSSLVRQSP (71 aa). 2 stretches are compositionally biased toward polar residues: residues 2060–2080 and 2094–2117; these read CPANSATTASDPHNSVPQGST and PTTSYPPTLGTSHSAHSVQSSLVR.

This sequence belongs to the pecanex family. Specifically expressed in the germ line and not in the somatic cells of the testis, reaching its peak at the pachytene stage of the meiotic prophase. Detected in pachytene spermatocytes and round spermatids (at protein level).

The protein localises to the membrane. This is Pecanex-like protein 1 from Rattus norvegicus (Rat).